The chain runs to 125 residues: Glycine cleavage system H protein (125 aa).

One can recognise a Lipoyl-binding domain in the interval 22–104 (SYVIGITDFA…YDTGWILKLE (83 aa)). The residue at position 63 (lysine 63) is an N6-lipoyllysine.

This sequence belongs to the GcvH family. The glycine cleavage system is composed of four proteins: P, T, L and H. It depends on (R)-lipoate as a cofactor.

The glycine cleavage system catalyzes the degradation of glycine. The H protein shuttles the methylamine group of glycine from the P protein to the T protein. Functionally, is also involved in protein lipoylation via its role as an octanoyl/lipoyl carrier protein intermediate. This chain is Glycine cleavage system H protein, found in Listeria monocytogenes serotype 4b (strain CLIP80459).